The chain runs to 143 residues: Putative pre-16S rRNA nuclease (143 aa).

This sequence belongs to the YqgF nuclease family.

It is found in the cytoplasm. Its function is as follows. Could be a nuclease involved in processing of the 5'-end of pre-16S rRNA. This Agathobacter rectalis (strain ATCC 33656 / DSM 3377 / JCM 17463 / KCTC 5835 / VPI 0990) (Eubacterium rectale) protein is Putative pre-16S rRNA nuclease.